The primary structure comprises 297 residues: 33 kDa chaperonin (297 aa).

Disulfide bonds link Cys232–Cys234 and Cys266–Cys269.

This sequence belongs to the HSP33 family. Under oxidizing conditions two disulfide bonds are formed involving the reactive cysteines. Under reducing conditions zinc is bound to the reactive cysteines and the protein is inactive.

Its subcellular location is the cytoplasm. Functionally, redox regulated molecular chaperone. Protects both thermally unfolding and oxidatively damaged proteins from irreversible aggregation. Plays an important role in the bacterial defense system toward oxidative stress. This chain is 33 kDa chaperonin, found in Pseudomonas aeruginosa (strain LESB58).